The primary structure comprises 219 residues: Uracil-DNA glycosylase (219 aa).

Residue Asp-61 is the Proton acceptor of the active site.

The protein belongs to the uracil-DNA glycosylase (UDG) superfamily. UNG family.

The protein localises to the cytoplasm. The catalysed reaction is Hydrolyzes single-stranded DNA or mismatched double-stranded DNA and polynucleotides, releasing free uracil.. Functionally, excises uracil residues from the DNA which can arise as a result of misincorporation of dUMP residues by DNA polymerase or due to deamination of cytosine. The chain is Uracil-DNA glycosylase from Exiguobacterium sibiricum (strain DSM 17290 / CCUG 55495 / CIP 109462 / JCM 13490 / 255-15).